The primary structure comprises 439 residues: Microfibrillar-associated protein 1A (439 aa).

The disordered stretch occupies residues 1 to 200 (MSVPSALMKQ…SEDEMEPRLK (200 aa)). Ser-2 is subject to N-acetylserine. Positions 23 to 34 (RNEKGEISMEKV) are enriched in basic and acidic residues. Phosphoserine occurs at positions 52 and 53. Positions 61–70 (QFIKKAKEQE) are enriched in basic and acidic residues. Residue Lys-67 forms a Glycyl lysine isopeptide (Lys-Gly) (interchain with G-Cter in SUMO2) linkage. A compositionally biased stretch (acidic residues) spans 71–81 (AEPEEQEEDSS). Residues Ser-94, Ser-116, Ser-118, Ser-132, and Ser-133 each carry the phosphoserine modification. Acidic residues-rich tracts occupy residues 112-122 (VVGESDSEVEG) and 131-144 (DSSE…DDEE). Residues 145 to 163 (IERRRGMMRQRAQERKNEE) show a composition bias toward basic and acidic residues. Acidic residues predominate over residues 178 to 195 (ESESESEYEEYTDSEDEM). Lys-249 participates in a covalent cross-link: Glycyl lysine isopeptide (Lys-Gly) (interchain with G-Cter in SUMO2). Thr-267 carries the phosphothreonine modification. A Glycyl lysine isopeptide (Lys-Gly) (interchain with G-Cter in SUMO2) cross-link involves residue Lys-357. Ser-361 is subject to Phosphoserine. Residues Lys-371, Lys-381, Lys-415, and Lys-418 each participate in a glycyl lysine isopeptide (Lys-Gly) (interchain with G-Cter in SUMO2) cross-link. Residue Ser-432 is modified to Phosphoserine.

The protein belongs to the MFAP1 family. As to quaternary structure, component of the spliceosome B complex. Interacts with PRPF38A (via N-terminal interaction domain).

It is found in the nucleus. In terms of biological role, involved in pre-mRNA splicing as a component of the spliceosome. This chain is Microfibrillar-associated protein 1A, found in Mus musculus (Mouse).